A 321-amino-acid chain; its full sequence is Sideroflexin-3 (321 aa).

M1 is modified (N-acetylmethionine). The next 4 membrane-spanning stretches (helical) occupy residues 146–164, 174–194, 225–245, and 266–286; these read LGTA…ALGL, LVGR…NIPL, IFQV…IPPV, and LQVG…CALF.

The protein belongs to the sideroflexin family. As to expression, widely expressed.

It localises to the mitochondrion membrane. The enzyme catalyses L-serine(in) = L-serine(out). In terms of biological role, mitochondrial serine transporter that mediates transport of serine into mitochondria, an important step of the one-carbon metabolism pathway. Mitochondrial serine is converted to glycine and formate, which then exits to the cytosol where it is used to generate the charged folates that serve as one-carbon donors. This Mus musculus (Mouse) protein is Sideroflexin-3.